The following is a 695-amino-acid chain: MSDLSKYRNIGIFAHVDAGKTTTTERILKLTGQIHKTGEVHDGESTTDFMEQEAERGITIQSAAVSCFWKDHRFNVIDTPGHVDFTVEVYRSLKVLDGGIGVFCGSGGVEPQSETNWRYANDSEVARIIFVNKLDRIGADFLNVVDQIKNVLGAVPLVMTLPIGREDDFVGVVDILSRQAYVWDDTGLPENYEITDIPADMVDDVEAYREELIETALEQDDDLLEAYMEGEMPTDEQVKMCIRRGTRDCSFFPTYCGSAFKNKGMQLILDAVVDYLPSPTEVDPQPLTDPETGEPTGEVATVSVDAPLKALAFKIMDDRFGALTFIRIYAGKLNKGDTILNSATGKTERIGRMVEMQADQRNELSSAQAGDIIAVVGMKNVKTGHTLCDVKHECTLEAMIFPTPVISIAVTPKDKGGSEKMGIAIGKMVAEDPSFLVHTDEETGETILKGMGELHLDIKVDILKRTYGVDLIVGAPQVAYRETITKPVEDSYTHKKQSGGSGQFGKIDYIMKPGEVGSGFKFTSSVVGGNVPKEFWPAIEKGFKGMMDTGVLAGFPVLDVEIELLDGGFHAVDSSAVAFEIAAKGAFRQSMPKAGAQLLEPIMAVDVFTPEDHVGDVIGDLNRRRGMIKDQMAGVTGSRIKADVPLSEMFGYIGHLRTMTSGRGQFSMEFAHYAPCPVNVAATVIEEVKALNAKK.

The tr-type G domain occupies 5 to 280 (SKYRNIGIFA…AVVDYLPSPT (276 aa)). Residues 14-21 (AHVDAGKT), 78-82 (DTPGH), and 132-135 (NKLD) contribute to the GTP site.

It belongs to the TRAFAC class translation factor GTPase superfamily. Classic translation factor GTPase family. EF-G/EF-2 subfamily.

The protein localises to the cytoplasm. Functionally, catalyzes the GTP-dependent ribosomal translocation step during translation elongation. During this step, the ribosome changes from the pre-translocational (PRE) to the post-translocational (POST) state as the newly formed A-site-bound peptidyl-tRNA and P-site-bound deacylated tRNA move to the P and E sites, respectively. Catalyzes the coordinated movement of the two tRNA molecules, the mRNA and conformational changes in the ribosome. In Photobacterium profundum (strain SS9), this protein is Elongation factor G 2.